The primary structure comprises 754 residues: Fibronectin type III domain-containing protein 1 (754 aa).

Positions 1–19 (MKSWISISFLCMLFPLSNG) are cleaved as a signal peptide. Disordered regions lie at residues 40–61 (SLQG…SQGG), 85–106 (AQIS…TQFS), and 130–163 (AQHS…AQSG). The span at 130–161 (AQHSQAGAQGSQFPQSAAHTAQHHQGTAQPAQ) shows a compositional bias: low complexity. 5 consecutive Fibronectin type-III domains span residues 250–355 (PPQS…TPDL), 359–449 (APLN…TDKF), 453–545 (APRN…TKMD), 549–642 (EPMS…LPKP), and 645–742 (LVPN…SFPG). Residues 731-754 (SNLSSQQFSFPGQQVGQQQSNPWI) form a disordered region.

Prismatic layer of shell (at protein level). Expressed primarily in the mantle with highest level in the outer epithelium of the mantle edge and lower level in the mantle pallium.

The protein resides in the secreted. The chain is Fibronectin type III domain-containing protein 1 from Margaritifera margaritifera (Freshwater pearl mussel).